We begin with the raw amino-acid sequence, 449 residues long: MFS-type transporter 1 (449 aa).

The segment covering 1 to 37 (MTHSSSNEHEKEDDRRASDDMMDRDDQNAKEEQDVSK) has biased composition (basic and acidic residues). Residues 1–43 (MTHSSSNEHEKEDDRRASDDMMDRDDQNAKEEQDVSKDAPPVN) form a disordered region. 6 helical membrane-spanning segments follow: residues 61–81 (VAGG…IGIF), 97–117 (TISW…LVVG), 127–147 (YILL…SLST), 152–172 (ILLS…TPAV), 185–205 (LANG…PIMF), and 212–232 (VGFP…LIIA). Residue N233 is glycosylated (N-linked (GlcNAc...) asparagine). The next 6 membrane-spanning stretches (helical) occupy residues 262 to 282 (LLTT…INYI), 298 to 318 (YLIP…GFVA), 326 to 346 (VHTF…LPAA), 349 to 369 (APII…VAIL), 390 to 410 (FGVL…FVAH), and 420 to 440 (IWTG…RISL).

This sequence belongs to the major facilitator superfamily. Monocarboxylate porter (TC 2.A.1.13) family.

The protein resides in the cell membrane. It catalyses the reaction erythrostominone(in) = erythrostominone(out). The catalysed reaction is deoxyerythrostominone(in) = deoxyerythrostominone(out). It carries out the reaction epierythrostominol(in) = epierythrostominol(out). The enzyme catalyses deoxyerythrostominol(in) = deoxyerythrostominol(out). In terms of biological role, MFS-type transporter that mediates the secretion of the 4 major naphthoquinone derivatives produced, erythrostominone (NQ1), deoxyerythrostominone (NQ2), epierythrostominol (NQ4), and deoxyerythrostominol (NQ5), as well as of 3 newly identified naphthoquinone derivatives termed NQ7, NQ8 and NQ9. The chain is MFS-type transporter 1 from Ophiocordyceps sp. (strain BCC 1869) (Entomopathogenic fungus).